Consider the following 63-residue polypeptide: Venom peptide 2a (63 aa).

Positions 1 to 22 (MRGTSFILFAVVVILGFLNANA) are cleaved as a signal peptide. AXPX repeat units lie at residues 22–25 (AEPL), 26–29 (ANPA), 32–35 (ANPD), 38–41 (ANPD), and 44–47 (ANPE). Positions 23-48 (EPLANPAPLANPDPLANPDPLANPEA) are excised as a propeptide. Position 62 is a leucine amide (leucine 62).

In terms of tissue distribution, expressed by the venom gland.

The protein localises to the secreted. It is found in the target cell membrane. Functionally, antimicrobial peptide. Shows activities against Gram-positive bacteria (S.aureus MIC=50 uM and 200 ug/ml, and B.subtilis MIC=200 ug/ml), Gram-negative bacterium E.coli (MIC=100 uM and 200 ug/ml) and fungi (B.cinerea MIC=5 uM, S.cerevisiae MIC=128 ug/ml, S.pombe MIC=128 ug/ml, A.nidulans MIC=128 ug/ml, and C.albicans MIC=64-100 uM). Shows cytolytic activity against insect cell lines. Its hemolytic activity is controversial, as Baek and colleagues report no activity while Bea and colleagues note a hemolytic activity. In vivo, peptide injection in the vicinity of the head and thorax of lepidopteran larvae induces feeding disorder followed by death due to starvation. Is weakly lethal when tested on water flies (D.magna), but is not lethal on lady beetles (H.convergens). The protein is Venom peptide 2a of Eumenes pomiformis (Potter wasp).